We begin with the raw amino-acid sequence, 311 residues long: tRNA dimethylallyltransferase (311 aa).

Gly10–Ser17 is a binding site for ATP. Thr12–Ser17 is a binding site for substrate. Residues Asp35–Gln38 are interaction with substrate tRNA.

Belongs to the IPP transferase family. In terms of assembly, monomer. Mg(2+) is required as a cofactor.

It carries out the reaction adenosine(37) in tRNA + dimethylallyl diphosphate = N(6)-dimethylallyladenosine(37) in tRNA + diphosphate. Catalyzes the transfer of a dimethylallyl group onto the adenine at position 37 in tRNAs that read codons beginning with uridine, leading to the formation of N6-(dimethylallyl)adenosine (i(6)A). In Carboxydothermus hydrogenoformans (strain ATCC BAA-161 / DSM 6008 / Z-2901), this protein is tRNA dimethylallyltransferase.